The sequence spans 510 residues: Probable cytochrome P450 4aa1 (510 aa).

Cys-450 contributes to the heme binding site.

This sequence belongs to the cytochrome P450 family. The cofactor is heme.

It is found in the endoplasmic reticulum membrane. It localises to the microsome membrane. Functionally, may be involved in the metabolism of insect hormones and in the breakdown of synthetic insecticides. The sequence is that of Probable cytochrome P450 4aa1 (Cyp4aa1) from Drosophila melanogaster (Fruit fly).